A 527-amino-acid polypeptide reads, in one-letter code: MELTLWTYEGPPHVGAMRIAASMQGVHYVLHAPQGDTYADLLFTMIERRDQRPPVTYTTFQARDLGGDTAELVKRSIRDAADRFQPQALLVGESCTAELIQDQPGALAQGMNLPMPVVSLELPAYSKKENWGAAETFYQLIRTLLKPQLPPAGLSKPDPKRWQEQGRRPRVNLLGPSLLGFRCRDDVREVRVLLDELGIDTHVVAPLGASPEDLRRIPQAEANICLYPEVADSSCRWLERQFGMPTVSTVPIGIGATEMFCRELQELLGLEPTSQGSGQSRMPWYSRSVDSTYLTGKRVFIFADATHAIAAARIASRELGFEVVGLGSYSREQARAVRAAAEELGLAALISDNYLEVEAAMAEAAPELVLGTQMERHSAKRLGIPCAVISSPLHVQDVPARYAPQMGWEGANVIFDSWVHPLMMGLEEHLIGMFRHDFEFVDGHMSHKGEKPPGPEAADPITLAAEANGVDEAELLRWAPSGQAELSRIPFFVRGKVKRNTESYAQERGIINITDEVLYEAKAHFSR.

D36 is a [4Fe-4S] cluster binding site. The active-site Proton donor is D290. 425–426 is a binding site for substrate; sequence GL.

It belongs to the ChlB/BchB/BchZ family. In terms of assembly, protochlorophyllide reductase is composed of three subunits; ChlL, ChlN and ChlB. Forms a heterotetramer of two ChlB and two ChlN subunits. [4Fe-4S] cluster is required as a cofactor.

The catalysed reaction is chlorophyllide a + oxidized 2[4Fe-4S]-[ferredoxin] + 2 ADP + 2 phosphate = protochlorophyllide a + reduced 2[4Fe-4S]-[ferredoxin] + 2 ATP + 2 H2O. The protein operates within porphyrin-containing compound metabolism; chlorophyll biosynthesis (light-independent). Component of the dark-operative protochlorophyllide reductase (DPOR) that uses Mg-ATP and reduced ferredoxin to reduce ring D of protochlorophyllide (Pchlide) to form chlorophyllide a (Chlide). This reaction is light-independent. The NB-protein (ChlN-ChlB) is the catalytic component of the complex. This is Light-independent protochlorophyllide reductase subunit B from Synechococcus sp. (strain RCC307).